A 340-amino-acid chain; its full sequence is Glycerol-3-phosphate dehydrogenase [NAD(P)+] (340 aa).

Residues Ser-15, Tyr-16, His-36, and Lys-110 each contribute to the NADPH site. Sn-glycerol 3-phosphate is bound by residues Lys-110, Gly-139, and Thr-141. Residue Ala-143 participates in NADPH binding. Residues Lys-196, Asp-249, Ser-259, Arg-260, and Asn-261 each contribute to the sn-glycerol 3-phosphate site. Catalysis depends on Lys-196, which acts as the Proton acceptor. NADPH is bound at residue Arg-260. The NADPH site is built by Val-284 and Glu-286.

It belongs to the NAD-dependent glycerol-3-phosphate dehydrogenase family.

It is found in the cytoplasm. The enzyme catalyses sn-glycerol 3-phosphate + NAD(+) = dihydroxyacetone phosphate + NADH + H(+). The catalysed reaction is sn-glycerol 3-phosphate + NADP(+) = dihydroxyacetone phosphate + NADPH + H(+). The protein operates within membrane lipid metabolism; glycerophospholipid metabolism. In terms of biological role, catalyzes the reduction of the glycolytic intermediate dihydroxyacetone phosphate (DHAP) to sn-glycerol 3-phosphate (G3P), the key precursor for phospholipid synthesis. The protein is Glycerol-3-phosphate dehydrogenase [NAD(P)+] of Serratia marcescens.